Here is a 385-residue protein sequence, read N- to C-terminus: MDIRIKEKPEEFYVKEIKKLDLKEKGQYAYFLLKKKDMTTLDAVRHISHRFGIPLKNIGFAGLKDKKAVTEQYISVKDLNEEKIRKMDGYRTENLELKFLGFSDKGLELGEIEGNYFEVVVRGVTKYHRRVFPRMKELVENYGCENYFGEQRFGSVKHAEEFIVKYLLRHEYEEAMKEYLTSLGDKRLKRLLRKAWRDWDRFLSLMPKGAKPELEVVKALRRGESFKNAFMVLPKNIRLMFVFAYQSYLWNRYLYTFVVRYLKYCKTPFLKWELAFFNDMSEVIWEEIKDLEIPYLGVEYKPRNKKAEIVMKEVLQDEGITPKMLMAERIGIKLFSDGVRKAFFKPQGLKVIEERKNSLKLSFTLPPGSYATILLRKLFCSDVKS.

D65 (nucleophile) is an active-site residue. Residues 143–345 (GCENYFGEQR…SDGVRKAFFK (203 aa)) enclose the TRUD domain.

This sequence belongs to the pseudouridine synthase TruD family.

The enzyme catalyses uridine(13) in tRNA = pseudouridine(13) in tRNA. Responsible for synthesis of pseudouridine from uracil-13 in transfer RNAs. The protein is tRNA pseudouridine synthase D of Aquifex aeolicus (strain VF5).